Consider the following 368-residue polypeptide: Spermidine/putrescine import ATP-binding protein PotA (368 aa).

Residues 6 to 236 (VSIKNVSKFF…PVNVFAATFI (231 aa)) enclose the ABC transporter domain. ATP is bound at residue 38–45 (GPSGCGKT).

This sequence belongs to the ABC transporter superfamily. Spermidine/putrescine importer (TC 3.A.1.11.1) family. As to quaternary structure, the complex is composed of two ATP-binding proteins (PotA), two transmembrane proteins (PotB and PotC) and a solute-binding protein (PotD).

It is found in the cell inner membrane. It carries out the reaction ATP + H2O + polyamine-[polyamine-binding protein]Side 1 = ADP + phosphate + polyamineSide 2 + [polyamine-binding protein]Side 1.. In terms of biological role, part of the ABC transporter complex PotABCD involved in spermidine/putrescine import. Responsible for energy coupling to the transport system. This Thermotoga maritima (strain ATCC 43589 / DSM 3109 / JCM 10099 / NBRC 100826 / MSB8) protein is Spermidine/putrescine import ATP-binding protein PotA.